Consider the following 141-residue polypeptide: Myosin regulatory light chain cdc4 (141 aa).

Phosphoserine occurs at positions 2 and 6. 3 EF-hand domains span residues 3-38 (TDDS…CGQN), 74-109 (GDPE…LGEK), and 109-141 (KLSN…ILAN). Ca(2+) contacts are provided by aspartate 87, aspartate 89, threonine 91, methionine 93, and glutamate 98.

In terms of assembly, binds to myosin II chains myo2 and myo3. Interacts with vps27 and a PI 4-kinase pik1. Phosphorylated on either Ser-2 or Ser-6 but not both. Phosphorylation is not essential for the function of the protein.

Its subcellular location is the cytoplasm. In terms of biological role, involved in cytokinesis. Required for the formation and function of the contractile ring. The chain is Myosin regulatory light chain cdc4 (cdc4) from Schizosaccharomyces pombe (strain 972 / ATCC 24843) (Fission yeast).